Reading from the N-terminus, the 806-residue chain is Mitogen-activated protein kinase 7 (806 aa).

Residues 1-23 (MAEPLKEEDGEDGSGEPPGRVKA) form a disordered region. Position 2 is an N-acetylalanine (Ala2). Positions 2–77 (AEPLKEEDGE…VVSSARRRLT (76 aa)) are required for cytoplasmic targeting. The Protein kinase domain maps to 55-347 (YEIIETIGNG…AAAALRHPFL (293 aa)). Residues 61-69 (IGNGAYGVV) and Lys84 each bind ATP. The interval 78–139 (GQQVAIKKIP…FRSVYVVLDL (62 aa)) is required for binding to MAP2K5. Positions 140–406 (MESDLHQIIH…QQIRFQPSLQ (267 aa)) are necessary for oligomerization. The active-site Proton acceptor is the Asp182. Positions 219-221 (TEY) match the TXY motif. The may not be required for kinase activity; required to stimulate MEF2C activity stretch occupies residues 407–806 (PVASEPVCPD…LSDLPDLQEP (400 aa)). Disordered stretches follow at residues 424–473 (APSG…AISD) and 488–727 (RSRL…PKGS). Over residues 433–443 (SPPPALPPCSD) the composition is skewed to pro residues. Composition is skewed to basic and acidic residues over residues 502–519 (PEPR…EREE), 527–544 (RAKE…KERG), and 563–573 (DNDRSLLERWT). The Nuclear localization signal motif lies at 505–539 (RKPVTAQERQREREEKRRRRQERAKEREKRRQERE). Residues 578 to 592 (PPAPAPAPAPAPAPA) are compositionally biased toward pro residues. Residues 593–603 (PSSAQPTSTPT) show a composition bias toward low complexity. The segment covering 627 to 643 (VCPPPGPVPQPAGPIPA) has biased composition (pro residues). Residues 647-660 (TAPSTSLLASQSLV) show a composition bias toward polar residues. The span at 678–689 (PSGPPPPDPGLT) shows a compositional bias: pro residues. Residues 693–710 (STSESPDVNLVTQQLSKS) show a composition bias toward polar residues. Ser710 is subject to Phosphoserine. Thr723 is subject to Phosphothreonine.

It belongs to the protein kinase superfamily. CMGC Ser/Thr protein kinase family. MAP kinase subfamily. In terms of assembly, interacts with MAP2K5. Forms oligomers. Interacts with MEF2A, MEF2C and MEF2D; the interaction phosphorylates the MEF2s and enhances transcriptional activity of MEF2A, MEF2C but not MEF2D. Interacts with SGK1. Interacts with PML. Interacts (via N-terminal half) with HSP90AB1-CDC37 chaperone complex in resting cells; the interaction is MAP2K5-independent and prevents MAPK7 from ubiquitination and proteasomal degradation. Interacts with STUB1/CHIP; the interaction is enhanced in the presence of IGF1 or MAP2K5 and promotes STUB1/CHIP E3 ligase activity. Requires Mg(2+) as cofactor. In terms of processing, dually phosphorylated on Thr-219 and Tyr-221, which activates the enzyme. In terms of tissue distribution, detected in testis, brain, kidney, lung and heart. Detected in total embryo (at protein level).

Its subcellular location is the cytoplasm. The protein localises to the nucleus. It localises to the PML body. It carries out the reaction L-seryl-[protein] + ATP = O-phospho-L-seryl-[protein] + ADP + H(+). The enzyme catalyses L-threonyl-[protein] + ATP = O-phospho-L-threonyl-[protein] + ADP + H(+). Activated by tyrosine and threonine phosphorylation. Activated in response to hyperosmolarity, hydrogen peroxide, and epidermal growth factor (EGF). Functionally, plays a role in various cellular processes such as proliferation, differentiation and cell survival. The upstream activator of MAPK7 is the MAPK kinase MAP2K5. Upon activation, it translocates to the nucleus and phosphorylates various downstream targets including MEF2C. EGF activates MAPK7 through a Ras-independent and MAP2K5-dependent pathway. As part of the MAPK/ERK signaling pathway, acts as a negative regulator of apoptosis in cardiomyocytes via interaction with STUB1/CHIP and promotion of STUB1-mediated ubiquitination and degradation of ICER-type isoforms of CREM. May have a role in muscle cell differentiation. May be important for endothelial function and maintenance of blood vessel integrity. MAP2K5 and MAPK7 interact specifically with one another and not with MEK1/ERK1 or MEK2/ERK2 pathways. Phosphorylates SGK1 at Ser-78 and this is required for growth factor-induced cell cycle progression. Involved in the regulation of p53/TP53 by disrupting the PML-MDM2 interaction. The protein is Mitogen-activated protein kinase 7 (Mapk7) of Mus musculus (Mouse).